The chain runs to 362 residues: Aminomethyltransferase (362 aa).

The protein belongs to the GcvT family. As to quaternary structure, the glycine cleavage system is composed of four proteins: P, T, L and H.

The catalysed reaction is N(6)-[(R)-S(8)-aminomethyldihydrolipoyl]-L-lysyl-[protein] + (6S)-5,6,7,8-tetrahydrofolate = N(6)-[(R)-dihydrolipoyl]-L-lysyl-[protein] + (6R)-5,10-methylene-5,6,7,8-tetrahydrofolate + NH4(+). Functionally, the glycine cleavage system catalyzes the degradation of glycine. This is Aminomethyltransferase from Listeria monocytogenes serotype 4b (strain F2365).